Consider the following 191-residue polypeptide: MKVKSILSEGKQIQLATELVRLGARLQVLEVSTTLSRERLVKLYKEVKGVSPPKGMLPYSEDWFTGWQPNMHSSLFINIYNYITQYTNVRDIDAIIKSYQLYLEHIEVNHLQCILSFTRAWTLVRFVESKVLSVTSCVKCTGNFLVHSLDIQSNHVCGLCHVPSRAGKTKRAAAQKAKEAQEVEIREACAV.

Positions 137, 140, 157, and 160 each coordinate Zn(2+).

It belongs to the FlhC family. As to quaternary structure, heterohexamer composed of two FlhC and four FlhD subunits. Each FlhC binds a FlhD dimer, forming a heterotrimer, and a hexamer assembles by dimerization of two heterotrimers. It depends on Zn(2+) as a cofactor.

It is found in the cytoplasm. Functionally, functions in complex with FlhD as a master transcriptional regulator that regulates transcription of several flagellar and non-flagellar operons by binding to their promoter region. Activates expression of class 2 flagellar genes, including fliA, which is a flagellum-specific sigma factor that turns on the class 3 genes. Also regulates genes whose products function in a variety of physiological pathways. This Nitrosomonas eutropha (strain DSM 101675 / C91 / Nm57) protein is Flagellar transcriptional regulator FlhC.